The sequence spans 448 residues: Alpha-2B adrenergic receptor (448 aa).

Topologically, residues 1–12 (MDHQEPYSVQAT) are extracellular. A helical transmembrane segment spans residues 13 to 38 (AAIAAVITFLILFTIFGNALVILAVL). Residues 39-49 (TSRSLPAPQNL) are Cytoplasmic-facing. The helical transmembrane segment at 50-75 (FLVSLAAADILVATLIIPFSLANELL) threads the bilayer. The Extracellular segment spans residues 76–85 (GYWYFWRTWC). Residues C85 and C163 are joined by a disulfide bond. Residues 86-108 (EVYLALDVLFCTSSIVHLCAISL) form a helical membrane-spanning segment. Residues 109–130 (DRYWAVSRALEYNSKRTPRRIK) are Cytoplasmic-facing. A helical transmembrane segment spans residues 131-153 (CIILTVWLIAAVISLPPLIYKGD). At 154 to 168 (QGPSPRGPQCKINQE) the chain is on the extracellular side. A helical membrane pass occupies residues 169-192 (AWYILASSIGSFFAPCLIMILVYL). At 193-370 (RIYLIAKRSH…MTREKRFTFV (178 aa)) the chain is on the cytoplasmic side. A disordered region spans residues 203–326 (RRGPRAKGGP…PASMCSPSLQ (124 aa)). Over residues 293-309 (AEEEAEEEEEEEGDECE) the composition is skewed to acidic residues. Residues 371–394 (LAVVIGVFVLCWFPFFFTYSLGAI) form a helical membrane-spanning segment. The Extracellular segment spans residues 395 to 403 (CPQHCKVPH). Residues 404–427 (GLFQFFFWIGYCNSSLNPVIYTIF) form a helical membrane-spanning segment. Topologically, residues 428–448 (NQDFRRAFRRILCRQWTQTAW) are cytoplasmic. C440 carries S-palmitoyl cysteine lipidation.

It belongs to the G-protein coupled receptor 1 family. Adrenergic receptor subfamily. ADRA2B sub-subfamily. In terms of assembly, interacts with RAB26. Interacts with PPP1R9B.

The protein localises to the cell membrane. Its function is as follows. Alpha-2 adrenergic receptors mediate the catecholamine-induced inhibition of adenylate cyclase through the action of G proteins. The chain is Alpha-2B adrenergic receptor (ADRA2B) from Cavia porcellus (Guinea pig).